The primary structure comprises 488 residues: Diacylglycerol kinase 3 (488 aa).

A disordered region spans residues 1-24 (MDSPVSKTDASKEKFVASRPSTAD). A DAGKc domain is found at 87–245 (APHAPMVVFI…SWKILVSMPS (159 aa)).

The protein belongs to the eukaryotic diacylglycerol kinase family. As to quaternary structure, monomer.

The catalysed reaction is a 1,2-diacyl-sn-glycerol + ATP = a 1,2-diacyl-sn-glycero-3-phosphate + ADP + H(+). Its function is as follows. Phosphorylates the second messenger diacylglycerol (DAG) to generate phosphatidic acid (PA), another important signaling molecule. PA is required for plant development and responses to abiotic stress and pathogen attack. May be involved in the accumulation of PA during cold stress. This Arabidopsis thaliana (Mouse-ear cress) protein is Diacylglycerol kinase 3 (DGK3).